A 736-amino-acid chain; its full sequence is MSRILVEDDNATPFHSMEIISSSLTLGQLLKNVSDVRKVEVGDETPVHEFFDRDGSSLDGDNDHLMRPVPFVLSFNNLTYNVSVRRKLDFHDLVPWRRTSFSKTKTLLDNISGETRDGEILAVLGASGSGKSTLIDALANRIAKGSLKGTVTLNGEALQSRMLKVISAYVMQDDLLFPMLTVEETLMFAAEFRLPRSLPKSKKKLRVQALIDQLGIRNAAKTIIGDEGHRGISGGERRRVSIGIDIIHDPIVLFLDEPTSGLDSTSAFMVVKVLKRIAESGSIIIMSIHQPSHRVLSLLDRLIFLSRGHTVFSGSPASLPSFFAGFGNPIPENENQTEFALDLIRELEGSAGGTRGLVEFNKKWQEMKKQSNPQTLTPPASPNPNLTLKEAISASISRGKLVSGGGGGSSVINHGGGTLAVPAFANPFWIEIKTLTRRSILNSRRQPELLGMRLATVIVTGFILATVFWRLDNSPKGVQERLGFFAFAMSTMFYTCADALPVFLQERYIFMRETAYNAYRRSSYVLSHAIVTFPSLIFLSLAFAVTTFWAVGLEGGLMGFLFYCLIILASFWSGSSFVTFLSGVVPHVMLGYTIVVAILAYFLLFSGFFINRDRIPQYWIWFHYLSLVKYPYEAVLQNEFSDPTECFVRGVQLFDNSPLGELTYGMKLRLLDSVSRSIGMRISSSTCLTTGADVLKQQGVTQLSKWNCLLITVGFGFLFRILFYLCLLLGSKNKRR.

The ABC transporter domain occupies 88–332 (LDFHDLVPWR…FAGFGNPIPE (245 aa)). Position 125–132 (125–132 (GASGSGKS)) interacts with ATP. A run of 7 helical transmembrane segments spans residues 410–430 (SVINHGGGTLAVPAFANPFWI), 449–469 (LLGMRLATVIVTGFILATVFW), 484–504 (FFAFAMSTMFYTCADALPVFL), 525–545 (VLSHAIVTFPSLIFLSLAFAV), 569–589 (ASFWSGSSFVTFLSGVVPHVM), 590–610 (LGYTIVVAILAYFLLFSGFFI), and 709–729 (LLITVGFGFLFRILFYLCLLL). An ABC transmembrane type-2 domain is found at 430 to 640 (IEIKTLTRRS…PYEAVLQNEF (211 aa)).

The protein belongs to the ABC transporter superfamily. ABCG family. Eye pigment precursor importer (TC 3.A.1.204) subfamily.

It is found in the membrane. This chain is ABC transporter G family member 16 (ABCG16), found in Arabidopsis thaliana (Mouse-ear cress).